The primary structure comprises 275 residues: Ribosomal protein L11 methyltransferase (275 aa).

Residues Thr-123, Gly-146, Asp-167, and Asn-208 each coordinate S-adenosyl-L-methionine.

Belongs to the methyltransferase superfamily. PrmA family.

It is found in the cytoplasm. The enzyme catalyses L-lysyl-[protein] + 3 S-adenosyl-L-methionine = N(6),N(6),N(6)-trimethyl-L-lysyl-[protein] + 3 S-adenosyl-L-homocysteine + 3 H(+). Methylates ribosomal protein L11. The protein is Ribosomal protein L11 methyltransferase of Campylobacter fetus subsp. fetus (strain 82-40).